The sequence spans 210 residues: Shikimate kinase (210 aa).

Gly-34–Val-39 is an ATP binding site. Ser-38 provides a ligand contact to Mg(2+). Positions 56, 80, and 102 each coordinate substrate. Residue Arg-140 coordinates ATP. Residue Arg-159 coordinates substrate.

It belongs to the shikimate kinase family. Monomer. Mg(2+) is required as a cofactor.

It localises to the cytoplasm. The catalysed reaction is shikimate + ATP = 3-phosphoshikimate + ADP + H(+). It participates in metabolic intermediate biosynthesis; chorismate biosynthesis; chorismate from D-erythrose 4-phosphate and phosphoenolpyruvate: step 5/7. In terms of biological role, catalyzes the specific phosphorylation of the 3-hydroxyl group of shikimic acid using ATP as a cosubstrate. This Bartonella quintana (strain Toulouse) (Rochalimaea quintana) protein is Shikimate kinase.